Reading from the N-terminus, the 436-residue chain is GTPase Der (436 aa).

EngA-type G domains follow at residues 3–168 (PLIA…PESD) and 177–352 (IRLA…QNRS). GTP-binding positions include 9 to 16 (GRPNVGKS), 56 to 60 (DTGGY), 120 to 123 (NKAE), 183 to 190 (GRPNVGKS), 230 to 234 (DTAGL), and 295 to 298 (NKWD). Positions 353–436 (RKISTSALNR…VTISLRFMQK (84 aa)) constitute a KH-like domain.

It belongs to the TRAFAC class TrmE-Era-EngA-EngB-Septin-like GTPase superfamily. EngA (Der) GTPase family. In terms of assembly, associates with the 50S ribosomal subunit.

Functionally, GTPase that plays an essential role in the late steps of ribosome biogenesis. This is GTPase Der from Chlorobium luteolum (strain DSM 273 / BCRC 81028 / 2530) (Pelodictyon luteolum).